The chain runs to 312 residues: DNA-directed RNA polymerase subunit alpha (312 aa).

Positions 1–226 (MIEFEKPNIT…EHLDIFVNLT (226 aa)) are alpha N-terminal domain (alpha-NTD). An alpha C-terminal domain (alpha-CTD) region spans residues 243–312 (KEKMLEMTIE…DLGLGLRKED (70 aa)).

The protein belongs to the RNA polymerase alpha chain family. As to quaternary structure, homodimer. The RNAP catalytic core consists of 2 alpha, 1 beta, 1 beta' and 1 omega subunit. When a sigma factor is associated with the core the holoenzyme is formed, which can initiate transcription.

It catalyses the reaction RNA(n) + a ribonucleoside 5'-triphosphate = RNA(n+1) + diphosphate. Its function is as follows. DNA-dependent RNA polymerase catalyzes the transcription of DNA into RNA using the four ribonucleoside triphosphates as substrates. The chain is DNA-directed RNA polymerase subunit alpha from Lacticaseibacillus casei (strain BL23) (Lactobacillus casei).